We begin with the raw amino-acid sequence, 243 residues long: Triosephosphate isomerase (243 aa).

Position 9–11 (9–11 (NWK)) interacts with substrate. The active-site Electrophile is His-96. Glu-165 acts as the Proton acceptor in catalysis. Residues Gly-171, Ser-204, and 225–226 (GG) each bind substrate.

Belongs to the triosephosphate isomerase family. In terms of assembly, homodimer.

It localises to the cytoplasm. The enzyme catalyses D-glyceraldehyde 3-phosphate = dihydroxyacetone phosphate. The protein operates within carbohydrate biosynthesis; gluconeogenesis. It functions in the pathway carbohydrate degradation; glycolysis; D-glyceraldehyde 3-phosphate from glycerone phosphate: step 1/1. Involved in the gluconeogenesis. Catalyzes stereospecifically the conversion of dihydroxyacetone phosphate (DHAP) to D-glyceraldehyde-3-phosphate (G3P). This Prochlorococcus marinus (strain MIT 9211) protein is Triosephosphate isomerase.